The primary structure comprises 238 residues: 1-(5-phosphoribosyl)-5-[(5-phosphoribosylamino)methylideneamino] imidazole-4-carboxamide isomerase (238 aa).

Aspartate 8 acts as the Proton acceptor in catalysis. The Proton donor role is filled by aspartate 129.

The protein belongs to the HisA/HisF family.

The protein localises to the cytoplasm. It catalyses the reaction 1-(5-phospho-beta-D-ribosyl)-5-[(5-phospho-beta-D-ribosylamino)methylideneamino]imidazole-4-carboxamide = 5-[(5-phospho-1-deoxy-D-ribulos-1-ylimino)methylamino]-1-(5-phospho-beta-D-ribosyl)imidazole-4-carboxamide. The protein operates within amino-acid biosynthesis; L-histidine biosynthesis; L-histidine from 5-phospho-alpha-D-ribose 1-diphosphate: step 4/9. This Anaeromyxobacter dehalogenans (strain 2CP-1 / ATCC BAA-258) protein is 1-(5-phosphoribosyl)-5-[(5-phosphoribosylamino)methylideneamino] imidazole-4-carboxamide isomerase.